An 862-amino-acid polypeptide reads, in one-letter code: Probable glutaminase ARB_05535/05536 (862 aa).

Positions 1-19 are cleaved as a signal peptide; the sequence is MLSWVLLAWAVACSALAGA. N106, N273, N436, N448, N486, N610, and N744 each carry an N-linked (GlcNAc...) asparagine glycan. The disordered stretch occupies residues 798–862; that stretch reads FLDDKDNNSP…SQMTIVNEND (65 aa). Polar residues predominate over residues 853–862; sequence SQMTIVNEND.

Belongs to the fungal glutaminase gtaA family.

The protein resides in the secreted. The catalysed reaction is L-glutamine + H2O = L-glutamate + NH4(+). Its function is as follows. Glutaminase catalyzes the hydrolysis of glutamine to glutamic acid and plays a key role in nitrogen metabolism. The polypeptide is Probable glutaminase ARB_05535/05536 (Arthroderma benhamiae (strain ATCC MYA-4681 / CBS 112371) (Trichophyton mentagrophytes)).